Consider the following 170-residue polypeptide: MNTPRIPIASHQAVMRCLRDKLQQANLTLQTDYTEPTVSYQQRGATAGTAWLQHWEIRLNPVLLQENQQAFIDEVVPHELAHLLVYARFGRVAPHGKEWRWMMESVLRVPAKRTHRFAVQSVQGKTFTYLCDCQRHELTIRRHNRVLRGETEYRCRRCGKTLRHDVKSSI.

The 142-residue stretch at 22 to 163 folds into the SprT-like domain; that stretch reads LQQANLTLQT…RCRRCGKTLR (142 aa). H78 contacts Zn(2+). The active site involves E79. H82 contacts Zn(2+).

The protein belongs to the SprT family. It depends on Zn(2+) as a cofactor.

Its subcellular location is the cytoplasm. This is Protein SprT from Pectobacterium carotovorum subsp. carotovorum (strain PC1).